The sequence spans 222 residues: MGSGSRERIVEVFDALDAELDRLDEVSFEVLTTPERLRSLERLECLVRRLPAVGHALINQLDAQASEEELGGTLCCALANRLRITKPDAALRIADAADLGPRRALTGEPLAPQLTATATAQRQGLIGEAHVKVIRALFRPPARRGGCVHPPGRRSRPGRQSRSISSRRAGPLRPAGHGLATPRRRPHRHRTRPQTRHHPEQPALRRYVTAKWLPDPPSAGHL.

Residues 142–222 (ARRGGCVHPP…LPDPPSAGHL (81 aa)) are disordered. Low complexity predominate over residues 160–169 (QSRSISSRRA). Positions 182-196 (PRRRPHRHRTRPQTR) are enriched in basic residues.

The protein belongs to the Rv1128c/1148c/1588c/1702c/1945/3466 family.

This is an uncharacterized protein from Mycobacterium tuberculosis (strain CDC 1551 / Oshkosh).